A 157-amino-acid polypeptide reads, in one-letter code: Ribosomal RNA large subunit methyltransferase H (157 aa).

S-adenosyl-L-methionine is bound by residues Leu74, Gly106, and 125–130 (LGNITF).

Belongs to the RNA methyltransferase RlmH family. Homodimer.

Its subcellular location is the cytoplasm. The catalysed reaction is pseudouridine(1915) in 23S rRNA + S-adenosyl-L-methionine = N(3)-methylpseudouridine(1915) in 23S rRNA + S-adenosyl-L-homocysteine + H(+). Specifically methylates the pseudouridine at position 1915 (m3Psi1915) in 23S rRNA. The chain is Ribosomal RNA large subunit methyltransferase H from Lawsonia intracellularis (strain PHE/MN1-00).